We begin with the raw amino-acid sequence, 201 residues long: NADH-quinone oxidoreductase subunit B 1 (201 aa).

Cys-80, Cys-81, Cys-145, and Cys-175 together coordinate [4Fe-4S] cluster.

The protein belongs to the complex I 20 kDa subunit family. In terms of assembly, NDH-1 is composed of 14 different subunits. Subunits NuoB, C, D, E, F, and G constitute the peripheral sector of the complex. [4Fe-4S] cluster serves as cofactor.

It is found in the cell inner membrane. It catalyses the reaction a quinone + NADH + 5 H(+)(in) = a quinol + NAD(+) + 4 H(+)(out). NDH-1 shuttles electrons from NADH, via FMN and iron-sulfur (Fe-S) centers, to quinones in the respiratory chain. The immediate electron acceptor for the enzyme in this species is believed to be ubiquinone. Couples the redox reaction to proton translocation (for every two electrons transferred, four hydrogen ions are translocated across the cytoplasmic membrane), and thus conserves the redox energy in a proton gradient. The protein is NADH-quinone oxidoreductase subunit B 1 of Rhodopseudomonas palustris (strain BisB18).